Reading from the N-terminus, the 64-residue chain is Prokaryotic ubiquitin-like protein Pup (64 aa).

Residues 1-38 are disordered; sequence MAQEQTKRGGGGGEDDDPTGSTAAGQERREKLTEETDD. The interval 21–58 is ARC ATPase binding; that stretch reads STAAGQERREKLTEETDDLLDEIDDVLEENAEDFVRAY. A coiled-coil region spans residues 23-52; that stretch reads AAGQERREKLTEETDDLLDEIDDVLEENAE. Glutamine 64 carries the deamidated glutamine modification. An Isoglutamyl lysine isopeptide (Gln-Lys) (interchain with K-? in acceptor proteins) cross-link involves residue glutamine 64.

The protein belongs to the prokaryotic ubiquitin-like protein family. As to quaternary structure, strongly interacts with the proteasome-associated ATPase ARC through a hydrophobic interface; the interacting region of Pup lies in its C-terminal half. There is one Pup binding site per ARC hexamer ring. Is modified by deamidation of its C-terminal glutamine to glutamate by the deamidase Dop, a prerequisite to the subsequent pupylation process.

It participates in protein degradation; proteasomal Pup-dependent pathway. Its function is as follows. Protein modifier that is covalently attached to lysine residues of substrate proteins, thereby targeting them for proteasomal degradation. The tagging system is termed pupylation. The chain is Prokaryotic ubiquitin-like protein Pup from Mycolicibacterium gilvum (strain PYR-GCK) (Mycobacterium gilvum (strain PYR-GCK)).